The primary structure comprises 784 residues: ent-copalyl diphosphate synthase 2, chloroplastic (784 aa).

The N-terminal 57 residues, 1–57 (MSMTLFASVTRPGLPGPTALRFPETRHLFHSVTAFAASFSPSKSSVGSSQCNATTPP), are a transit peptide targeting the chloroplast. Residue Lys242 coordinates substrate. Mg(2+) is bound by residues Asp379 and Asp381. The short motif at 379–382 (DIDD) is the DXDD motif element. Lys466 provides a ligand contact to substrate.

This sequence belongs to the terpene synthase family. Requires Mg(2+) as cofactor. As to expression, present in both leaves and flowers.

It localises to the plastid. The protein localises to the chloroplast. The protein operates within plant hormone biosynthesis; gibberellin biosynthesis. It participates in secondary metabolite biosynthesis; terpenoid biosynthesis. In terms of biological role, involved in the biosynthesis of labdane-type diterpenoid including marrubiin and other labdane-related furanoid diterpenoids with potential applications as anti-diabetics, analgesics or vasorelaxants. May be involved in the conversion of geranylgeranyl diphosphate (GGPP) to ent-copalyl diphosphate (ent-CPP) and 8-hydroxycopalyl diphosphate (LPP, labda-13-en-8-ol diphosphate). In Marrubium vulgare (White horehound), this protein is ent-copalyl diphosphate synthase 2, chloroplastic.